Reading from the N-terminus, the 326-residue chain is Membrane-associated kinase regulator 5 (326 aa).

Disordered stretches follow at residues 188-239 (TKKQ…GMSP) and 267-326 (GSRE…KISD). Composition is skewed to low complexity over residues 190–202 (KQSSSTITSPTSS) and 270–305 (ESSLLSRSTSESSSQEKLSTSSSEDSYLFSRISSDS).

As to expression, expressed in roots.

Its subcellular location is the cell membrane. The protein localises to the cytoplasm. It is found in the cytosol. In terms of biological role, positive effector of CLE45 peptide signaling. Post-transcriptionally regulated amplifier of the CLE45 peptide signal that acts downstream of BAM3 in the regulation of the transition of root protophloem cells from proliferation to differentiation; thus preventing primary root elongation but stimulating lateral roots development. In Arabidopsis thaliana (Mouse-ear cress), this protein is Membrane-associated kinase regulator 5.